A 452-amino-acid chain; its full sequence is Growth/differentiation factor 6 (452 aa).

Residues 1 to 22 form the signal peptide; the sequence is MDTPRVLLWAIFLISFLWDLPG. The propeptide occupies 23-332; that stretch reads FQQASISSSS…LPSPGRRRRR (310 aa). The disordered stretch occupies residues 29–93; sequence SSSSSTELDS…QEPPGRGPRV (65 aa). Composition is skewed to basic and acidic residues over residues 37–46 and 58–75; these read DSTKDVENRK and AEGR…ELRR. The N-linked (GlcNAc...) asparagine glycan is linked to asparagine 115. Disordered stretches follow at residues 244–267 and 301–348; these read RDSG…LGFG and AEAA…KKSR. Residues 301 to 317 show a composition bias toward low complexity; sequence AEAAGAEGSWPAPSGAP. Positions 327-348 are enriched in basic residues; it reads GRRRRRTALSSRHGKRHGKKSR. 3 disulfides stabilise this stretch: cysteine 351–cysteine 417, cysteine 380–cysteine 449, and cysteine 384–cysteine 451.

This sequence belongs to the TGF-beta family. Homodimer; disulfide-linked.

It is found in the secreted. In terms of biological role, growth factor that controls proliferation and cellular differentiation in the retina and bone formation. Plays a key role in regulating apoptosis during retinal development. Establishes dorsal-ventral positional information in the retina and controls the formation of the retinotectal map. Required for normal formation of bones and joints in the limbs, skull, digits and axial skeleton. Plays a key role in establishing boundaries between skeletal elements during development. Regulation of GDF6 expression seems to be a mechanism for evolving species-specific changes in skeletal structures. Seems to positively regulate differentiation of chondrogenic tissue through the growth factor receptors subunits BMPR1A, BMPR1B, BMPR2 and ACVR2A, leading to the activation of SMAD1-SMAD5-SMAD8 complex. The regulation of chondrogenic differentiation is inhibited by NOG. Also involved in the induction of adipogenesis from mesenchymal stem cells. This mechanism acts through the growth factor receptors subunits BMPR1A, BMPR2 and ACVR2A and the activation of SMAD1-SMAD5-SMAD8 complex and MAPK14/p38. The polypeptide is Growth/differentiation factor 6 (Gdf6) (Rattus norvegicus (Rat)).